A 189-amino-acid polypeptide reads, in one-letter code: uncharacterized protein (189 aa).

4 helical membrane-spanning segments follow: residues 20–40 (FILG…YLTF), 46–66 (TIII…IILI), 100–120 (VLLF…SLNI), and 126–146 (FVLY…GDVI).

It to M.jannaschii MJ0795.1 and MJ1249.1.

The protein resides in the cell membrane. This is an uncharacterized protein from Methanocaldococcus jannaschii (strain ATCC 43067 / DSM 2661 / JAL-1 / JCM 10045 / NBRC 100440) (Methanococcus jannaschii).